A 280-amino-acid polypeptide reads, in one-letter code: Putative ABC transporter ATP-binding protein MTH_133 (280 aa).

An ABC transporter domain is found at 6-241 (IEAVDIRYTY…IDTIRGANLR (236 aa)). 39–46 (GPNGAGKS) provides a ligand contact to ATP.

The protein belongs to the ABC transporter superfamily.

The protein resides in the cell membrane. Functionally, probably part of an ABC transporter complex. Responsible for energy coupling to the transport system. This Methanothermobacter thermautotrophicus (strain ATCC 29096 / DSM 1053 / JCM 10044 / NBRC 100330 / Delta H) (Methanobacterium thermoautotrophicum) protein is Putative ABC transporter ATP-binding protein MTH_133.